The following is a 226-amino-acid chain: Cytidylate kinase (226 aa).

An ATP-binding site is contributed by 11-19; that stretch reads GPAAAGKST.

Belongs to the cytidylate kinase family. Type 1 subfamily.

It localises to the cytoplasm. The enzyme catalyses CMP + ATP = CDP + ADP. It carries out the reaction dCMP + ATP = dCDP + ADP. This Bacillus licheniformis (strain ATCC 14580 / DSM 13 / JCM 2505 / CCUG 7422 / NBRC 12200 / NCIMB 9375 / NCTC 10341 / NRRL NRS-1264 / Gibson 46) protein is Cytidylate kinase.